Consider the following 546-residue polypeptide: MVHPVELPAWKELEALAATTGRRPMRDMFAEDPGRFDRFSARLGDLLLDYSKNRIDAQVMAALVRLAGQAGLPAAREAMFGGEAFNVTEHRAVLHTALRNRSDRPVPVDGHDVMPEIRAVLARMKDFAGRVRSGDWKGATGRPIRSVVNIGIGGSDLGPVMVTEALKPYQKADLAVHFISNVDGSHAAEVLKLCDAETTLFIVASKTFTTQETIANARTCRAWLVEKLGEAAIPAHFVALSTNGKAVAEFGIDTANMFGFWDWVGGRYSLWSAIGLSIALAVGFERFEELLAGGHAMDRHFQDTPLEANLPVILGLIGIWNANFLGADAYAVLPYDQYLHRLPAYLQQLDMESNGKGTARDGATVSWGTGPMVFGEPGTNGQHAFYQLIHQGTRLIPCDFLAAANSHNPLGEHHLMLLSNVLAQAEALMKGKTGAEARAELEKAGMDPAEIAFQLPHRVFPGNRPSNTLLYPRLDPFMLGQLIALYEHKVFVQGVIWNICSFDQWGVELGKVLAKAILAELSSEKTSSTHDCSTAGLINAVRQMRQ.

The Proton donor role is filled by E352. Catalysis depends on residues H383 and K511.

It belongs to the GPI family.

The protein resides in the cytoplasm. The enzyme catalyses alpha-D-glucose 6-phosphate = beta-D-fructose 6-phosphate. It functions in the pathway carbohydrate biosynthesis; gluconeogenesis. Its pathway is carbohydrate degradation; glycolysis; D-glyceraldehyde 3-phosphate and glycerone phosphate from D-glucose: step 2/4. Catalyzes the reversible isomerization of glucose-6-phosphate to fructose-6-phosphate. This is Glucose-6-phosphate isomerase from Paramagnetospirillum magneticum (strain ATCC 700264 / AMB-1) (Magnetospirillum magneticum).